Reading from the N-terminus, the 265-residue chain is Tyrosine protein kinase-interacting protein (265 aa).

Residues 1-14 (MANEGEEIELTEFP) are compositionally biased toward acidic residues. The interval 1 to 49 (MANEGEEIELTEFPETEKERKDEEKLSSCSEETTDTSSSSSSDHVPAPI) is disordered. The Cytoplasmic portion of the chain corresponds to 1–238 (MANEGEEIEL…LKRLENKVNA (238 aa)). Residues 15 to 26 (ETEKERKDEEKL) are compositionally biased toward basic and acidic residues. Over residues 27 to 43 (SSCSEETTDTSSSSSSD) the composition is skewed to low complexity. The residue at position 123 (Tyr-123) is a Phosphotyrosine; by host LCK. Tyr-136 carries the phosphotyrosine; by host modification. Residues 155-164 (EDLQSFLEKY) form a CSKH/LBD2 region. Residues 172-192 (KRDLSATWDPGMPTPALPPRP) form a disordered region. Residues 183-192 (MPTPALPPRP) form an SH3B/LBD1 region. Residues 183 to 192 (MPTPALPPRP) show a composition bias toward pro residues. The tract at residues 225 to 234 (IVKDLKRLEN) is SH3 binding. A helical transmembrane segment spans residues 239 to 259 (IICLVVVILAVLLLVTVLSIL). Residues 260–265 (HIGMKS) lie on the Extracellular side of the membrane.

Binds host LCK, human WDR48 and human NXF1/TAP. Forms a complex with activated LCK and STAT1 and STAT3. In terms of processing, phosphorylation on Tyr-123 acts as a docking site for the recruitment of STATs 1 and 3.

Its subcellular location is the host cell membrane. Functionally, plays a critical role in virus induced T-cell transformation. Binds to T-cell-specific tyrosine kinase LCK SH2 and SH3 domains, thereby activating its kinase activity. Once phosphorylated by host LCK, forms a complex with at least STAT 1 and 3, resulting on the phosphorylation of STAT3 and presumably STAT1, and their migration into the nucleus to induce transcription of target genes. Stimulates host ILF3/NF-AT-90 activity. Association with host NXF1/TAP transduces the signal up-regulating surface expression of adhesion molecules as well as activating NF-kappa-B activity. Acts synergistically with StpC to stimulate NF-kappa-B activity and interleukin-2 gene expression. Activation of NF-kappa-B protects lymphocytes from apoptosis, thereby facilitating viral induced cell transformation. May cause down-regulation of host LCK and cell apoptosis when stably overexpressed ex vivo. Interaction with WDR48 induce degradation of T-cell receptor in a lysosome-dependent fashion, when both proteins are overexpressed. The biological effect of this interaction remains controversial since no T-cell receptor degradation is observed in infected cells. The polypeptide is Tyrosine protein kinase-interacting protein (Saimiriine herpesvirus 2 (strain 484) (SaHV-2)).